A 211-amino-acid polypeptide reads, in one-letter code: Endonuclease V (211 aa).

Mg(2+) contacts are provided by Asp31 and Glu95. Positions 182–211 are disordered; the sequence is IYEVKNTPSPNRSRKKRGNRGKDNNNSQGN.

The protein belongs to the endonuclease V family. Mg(2+) serves as cofactor.

The protein localises to the cytoplasm. It carries out the reaction Endonucleolytic cleavage at apurinic or apyrimidinic sites to products with a 5'-phosphate.. DNA repair enzyme involved in the repair of deaminated bases. Selectively cleaves double-stranded DNA at the second phosphodiester bond 3' to a deoxyinosine leaving behind the intact lesion on the nicked DNA. The chain is Endonuclease V from Pyrococcus horikoshii (strain ATCC 700860 / DSM 12428 / JCM 9974 / NBRC 100139 / OT-3).